A 159-amino-acid chain; its full sequence is Alpha-lactalbumin (159 aa).

The first 19 residues, 1 to 19 (MMRFVPLFLACISLPAFQA), serve as a signal peptide directing secretion. The region spanning 20-142 (TEFTKCEVSH…KLEQWRCEKP (123 aa)) is the C-type lysozyme domain. 4 cysteine pairs are disulfide-bonded: cysteine 25-cysteine 139, cysteine 47-cysteine 130, cysteine 80-cysteine 96, and cysteine 92-cysteine 110. Residue asparagine 64 is glycosylated (N-linked (GlcNAc...) asparagine). Positions 98, 101, 106, and 107 each coordinate Ca(2+).

The protein belongs to the glycosyl hydrolase 22 family. Lactose synthase (LS) is a heterodimer of a catalytic component, beta1,4-galactosyltransferase (beta4Gal-T1) and a regulatory component, alpha-lactalbumin (LA). In terms of tissue distribution, mammary gland specific. Secreted in milk.

The protein localises to the secreted. Its function is as follows. Regulatory subunit of lactose synthase, changes the substrate specificity of galactosyltransferase in the mammary gland making glucose a good acceptor substrate for this enzyme. This enables LS to synthesize lactose, the major carbohydrate component of milk. In other tissues, galactosyltransferase transfers galactose onto the N-acetylglucosamine of the oligosaccharide chains in glycoproteins. In Rattus norvegicus (Rat), this protein is Alpha-lactalbumin (Lalba).